A 172-amino-acid chain; its full sequence is Calcium channel flower homolog (172 aa).

Topologically, residues 1 to 32 (MSSSGGAPGASASSAPPAQEEGMTWWYRWLCR) are cytoplasmic. Residues 33–53 (LSGVLGAVSCAISGLFNCITI) traverse the membrane as a helical segment. Topologically, residues 54–57 (HPLN) are extracellular. The helical transmembrane segment at 58–78 (IAAGVWMIMNAFILLLCEAPF) threads the bilayer. Topologically, residues 79–102 (CCQFIEFANTVAEKVDRLRSWQKA) are cytoplasmic. Residues 103 to 123 (VFYCGMAVVPIVISLTLTTLL) form a helical membrane-spanning segment. The Extracellular portion of the chain corresponds to 124-125 (GN). A helical membrane pass occupies residues 126–142 (AIAFATGVLYGLSALGK). Topologically, residues 143 to 172 (KGDAISYARIQQQRQQADEEKLAETLEGEL) are cytoplasmic.

The protein belongs to the calcium channel flower family. Interacts with adaptor protein complex 2 (AP-2). In terms of tissue distribution, detected in skin cells at low levels of expression (at protein level).

It is found in the cell membrane. It localises to the cytoplasmic vesicle. Its subcellular location is the secretory vesicle. The protein resides in the synaptic vesicle. The protein localises to the golgi apparatus. It is found in the vesicle. It localises to the early endosome. Its subcellular location is the recycling endosome. The protein resides in the endoplasmic reticulum membrane. Transmembrane protein which mediates synaptic endocytosis and fitness-based cell culling. In response to different stimulus strengths, controls two major modes of synaptic vesicle (SV) retrieval in hippocampal neurons; Clathrin-mediated endocytosis (CME) in response to mild stimulation and activity-dependent bulk endocytosis (ADBE) in response to strong stimulation. In cytotoxic T-lymphoocytes (CTLs) facilitates calcium-dependent endocytosis of cytotoxic granules at the immuno synapse. Different isoforms work as fitness fingerprints in 'loser' and 'winner' cells and thereby mediate win/lose decisions as part of the cell competition process. In terms of biological role, functions with the other flower isoforms to produce tissue-specific fitness fingerprints that identify unfit or fit cells during cell selection processes in order to maintain tissue health. During cell competition, if levels of this isoform in cells is higher than in the surrounding neighboring cells, the cells are recognized as 'winner' cells, and do not undergo elimination via apoptosis. Its function is as follows. Functions with the other flower isoforms to produce tissue-specific fitness fingerprints that identify unfit or fit cells during cell selection processes in order to maintain tissue health. During cell competition, if levels of this isoform in unfit cells is higher than in the surrounding neighboring cells, the cells are recognized as 'loser' cells, and undergo elimination via apoptosis to be replaced by the surrounding healthy 'winner' cell population. The polypeptide is Calcium channel flower homolog (CACFD1) (Homo sapiens (Human)).